The sequence spans 246 residues: Putative pectinesterase 57 (246 aa).

N-linked (GlcNAc...) asparagine glycosylation is found at asparagine 127 and asparagine 143. Threonine 152 is a binding site for substrate. An N-linked (GlcNAc...) asparagine glycan is attached at asparagine 174. Aspartate 205 acts as the Proton donor in catalysis. Aspartate 226 (nucleophile) is an active-site residue.

It belongs to the pectinesterase family.

It catalyses the reaction [(1-&gt;4)-alpha-D-galacturonosyl methyl ester](n) + n H2O = [(1-&gt;4)-alpha-D-galacturonosyl](n) + n methanol + n H(+). It participates in glycan metabolism; pectin degradation; 2-dehydro-3-deoxy-D-gluconate from pectin: step 1/5. In terms of biological role, acts in the modification of cell walls via demethylesterification of cell wall pectin. The sequence is that of Putative pectinesterase 57 (PME57) from Arabidopsis thaliana (Mouse-ear cress).